The sequence spans 466 residues: 3-isopropylmalate dehydratase large subunit (466 aa).

Residues cysteine 347, cysteine 407, and cysteine 410 each contribute to the [4Fe-4S] cluster site.

This sequence belongs to the aconitase/IPM isomerase family. LeuC type 1 subfamily. Heterodimer of LeuC and LeuD. It depends on [4Fe-4S] cluster as a cofactor.

The catalysed reaction is (2R,3S)-3-isopropylmalate = (2S)-2-isopropylmalate. It functions in the pathway amino-acid biosynthesis; L-leucine biosynthesis; L-leucine from 3-methyl-2-oxobutanoate: step 2/4. Functionally, catalyzes the isomerization between 2-isopropylmalate and 3-isopropylmalate, via the formation of 2-isopropylmaleate. The polypeptide is 3-isopropylmalate dehydratase large subunit (Shewanella loihica (strain ATCC BAA-1088 / PV-4)).